A 213-amino-acid chain; its full sequence is Probable nicotinate-nucleotide adenylyltransferase (213 aa).

This sequence belongs to the NadD family.

The catalysed reaction is nicotinate beta-D-ribonucleotide + ATP + H(+) = deamido-NAD(+) + diphosphate. It functions in the pathway cofactor biosynthesis; NAD(+) biosynthesis; deamido-NAD(+) from nicotinate D-ribonucleotide: step 1/1. Catalyzes the reversible adenylation of nicotinate mononucleotide (NaMN) to nicotinic acid adenine dinucleotide (NaAD). The sequence is that of Probable nicotinate-nucleotide adenylyltransferase from Shigella boydii serotype 4 (strain Sb227).